The chain runs to 188 residues: dCTP deaminase (188 aa).

DCTP is bound by residues 111-116 (KSTYAR), 135-137 (TLE), glutamine 156, tyrosine 170, and glutamine 180. Glutamate 137 serves as the catalytic Proton donor/acceptor.

The protein belongs to the dCTP deaminase family. As to quaternary structure, homotrimer.

It carries out the reaction dCTP + H2O + H(+) = dUTP + NH4(+). It functions in the pathway pyrimidine metabolism; dUMP biosynthesis; dUMP from dCTP (dUTP route): step 1/2. Functionally, catalyzes the deamination of dCTP to dUTP. This Thioalkalivibrio sulfidiphilus (strain HL-EbGR7) protein is dCTP deaminase.